The chain runs to 88 residues: Small ribosomal subunit protein uS17 (88 aa).

This sequence belongs to the universal ribosomal protein uS17 family. In terms of assembly, part of the 30S ribosomal subunit.

Functionally, one of the primary rRNA binding proteins, it binds specifically to the 5'-end of 16S ribosomal RNA. This Pseudomonas fluorescens (strain SBW25) protein is Small ribosomal subunit protein uS17.